Here is a 632-residue protein sequence, read N- to C-terminus: Probable potassium transport system protein Kup (632 aa).

A run of 12 helical transmembrane segments spans residues 19-39 (LLCLAALGVVYGDIGTSPLYV), 57-77 (VIGIISLIFWTIMIVVSLKYV), 111-131 (ILFLIGAFGAALFFGDGVITP), 147-167 (PLLQPYVLPITVVVLIALFML), 175-195 (IGALFGPVMVIWFVSLGLVGL), 213-233 (AFAFCISNGWLAFIALGAVVL), 257-277 (WYGGVLPALTLNYLGQGALLL), 286-306 (PFFLLFPSWALYGAVGLATAA), 347-367 (IYIPFVNWTLLSVVLMAVLGF), 376-396 (AYGVAVTTTMVIETTLTFFVL), 404-424 (FLLGILVTAFFLAIDSAFFSA), and 429-449 (VAQGGWFPLVIGSVIFFIMIT).

This sequence belongs to the HAK/KUP transporter (TC 2.A.72) family.

The protein localises to the cell inner membrane. The enzyme catalyses K(+)(in) + H(+)(in) = K(+)(out) + H(+)(out). Transport of potassium into the cell. Likely operates as a K(+):H(+) symporter. The polypeptide is Probable potassium transport system protein Kup (Nitrosospira multiformis (strain ATCC 25196 / NCIMB 11849 / C 71)).